The primary structure comprises 144 residues: uncharacterized protein (144 aa).

An N-terminal signal peptide occupies residues 1–23 (MRKILLFATVIGFLIMVSGTLSY).

This is an uncharacterized protein from Archaeoglobus fulgidus (strain ATCC 49558 / DSM 4304 / JCM 9628 / NBRC 100126 / VC-16).